The sequence spans 312 residues: MSSPRSFFWVQEYFTPWDYTARAVTRILAYRKTPFQEMLIAETGAFGKGLMLDGHWQSTTVDEFLYHEALVHPAMVQVVQAGGIPRRVLVLGGAEGATLREVLRWRSVEQVVMVDIDGEVVAACREHLPEMHQGSFEDPRVEVVIADALDFLQETGPIWDVILSDLSDPIESGPAYRLFTQEFFRQIRSKLQPDGAFTIQAGPTGPVELHQHTRIVRTLKTVFAAVQPYAIYAPTYGGPLGFALAAQDPISPRPEPEQIDQILSQQLDPERGALQFIDGITLLGLYQVPAHLRRAIAAETVVYTLDNPPRIE.

The region spanning 7 to 247 (FFWVQEYFTP…GPLGFALAAQ (241 aa)) is the PABS domain. Gln-36 is a binding site for S-methyl-5'-thioadenosine. Residues His-67 and Glu-95 each coordinate spermidine. Residues Asp-115 and 147-148 (DA) each bind S-methyl-5'-thioadenosine. Asp-165 acts as the Proton acceptor in catalysis. Pro-174 contacts S-methyl-5'-thioadenosine.

This sequence belongs to the spermidine/spermine synthase family. Homodimer or homotetramer.

The protein localises to the cytoplasm. The catalysed reaction is S-adenosyl 3-(methylsulfanyl)propylamine + putrescine = S-methyl-5'-thioadenosine + spermidine + H(+). It functions in the pathway amine and polyamine biosynthesis; spermidine biosynthesis; spermidine from putrescine: step 1/1. In terms of biological role, catalyzes the irreversible transfer of a propylamine group from the amino donor S-adenosylmethioninamine (decarboxy-AdoMet) to putrescine (1,4-diaminobutane) to yield spermidine. The polypeptide is Polyamine aminopropyltransferase (Synechococcus sp. (strain JA-2-3B'a(2-13)) (Cyanobacteria bacterium Yellowstone B-Prime)).